Reading from the N-terminus, the 350-residue chain is Holliday junction branch migration complex subunit RuvB (350 aa).

The interval 1–183 (MSAERLVNPH…FVAVHRLVFY (183 aa)) is large ATPase domain (RuvB-L). Residues leucine 22, arginine 23, glycine 64, lysine 67, threonine 68, serine 69, 130 to 132 (EDF), arginine 173, tyrosine 183, and arginine 220 contribute to the ATP site. Mg(2+) is bound at residue threonine 68. The segment at 184–254 (SDDAMTEIVS…VARDALAQLE (71 aa)) is small ATPAse domain (RuvB-S). Positions 257–350 (ELGLDENDRR…ESGPQQATLF (94 aa)) are head domain (RuvB-H). DNA is bound by residues arginine 312 and arginine 317. The disordered stretch occupies residues 331-350 (YPERTLPADDESGPQQATLF).

Belongs to the RuvB family. As to quaternary structure, homohexamer. Forms an RuvA(8)-RuvB(12)-Holliday junction (HJ) complex. HJ DNA is sandwiched between 2 RuvA tetramers; dsDNA enters through RuvA and exits via RuvB. An RuvB hexamer assembles on each DNA strand where it exits the tetramer. Each RuvB hexamer is contacted by two RuvA subunits (via domain III) on 2 adjacent RuvB subunits; this complex drives branch migration. In the full resolvosome a probable DNA-RuvA(4)-RuvB(12)-RuvC(2) complex forms which resolves the HJ.

The protein localises to the cytoplasm. The catalysed reaction is ATP + H2O = ADP + phosphate + H(+). The RuvA-RuvB-RuvC complex processes Holliday junction (HJ) DNA during genetic recombination and DNA repair, while the RuvA-RuvB complex plays an important role in the rescue of blocked DNA replication forks via replication fork reversal (RFR). RuvA specifically binds to HJ cruciform DNA, conferring on it an open structure. The RuvB hexamer acts as an ATP-dependent pump, pulling dsDNA into and through the RuvAB complex. RuvB forms 2 homohexamers on either side of HJ DNA bound by 1 or 2 RuvA tetramers; 4 subunits per hexamer contact DNA at a time. Coordinated motions by a converter formed by DNA-disengaged RuvB subunits stimulates ATP hydrolysis and nucleotide exchange. Immobilization of the converter enables RuvB to convert the ATP-contained energy into a lever motion, pulling 2 nucleotides of DNA out of the RuvA tetramer per ATP hydrolyzed, thus driving DNA branch migration. The RuvB motors rotate together with the DNA substrate, which together with the progressing nucleotide cycle form the mechanistic basis for DNA recombination by continuous HJ branch migration. Branch migration allows RuvC to scan DNA until it finds its consensus sequence, where it cleaves and resolves cruciform DNA. This chain is Holliday junction branch migration complex subunit RuvB, found in Chloroflexus aurantiacus (strain ATCC 29366 / DSM 635 / J-10-fl).